We begin with the raw amino-acid sequence, 1311 residues long: DENN domain-containing protein 5B (1311 aa).

Residues 53–270 form the uDENN domain; that stretch reads ATAAGENFDQ…EVPLPASGRS (218 aa). Over residues 154–165 the composition is skewed to polar residues; the sequence is QAEHNTSAQNCT. The disordered stretch occupies residues 154 to 201; that stretch reads QAEHNTSAQNCTSSSSSSSSSSSSSSMDSLSSSLDDVDSPSAHGGRRT. Positions 166–187 are enriched in low complexity; the sequence is SSSSSSSSSSSSSSMDSLSSSL. A cDENN domain is found at 289-452; it reads ELPLADFPLA…AVMSLQTSVL (164 aa). The region spanning 454 to 619 is the dDENN domain; that stretch reads KELKSTSLRE…DNKIMSQWEE (166 aa). In terms of domain architecture, RUN 1 spans 809 to 969; sequence LEENTLIASL…DYFCFTSVFT (161 aa). Residues 854 to 874 are disordered; that stretch reads EQQLESPVSNGQERRKTESSV. Residues 962–982 traverse the membrane as a helical segment; it reads FCFTSVFTTIMIPYRAVIIPI. One can recognise a PLAT domain in the interval 973-1081; that stretch reads IPYRAVIIPI…DDGSLERVLI (109 aa). The RUN 2 domain occupies 1155–1306; the sequence is TVLLCGEGGL…FPITLETSLT (152 aa).

Belongs to the RAB6IP1 family.

The protein localises to the membrane. In terms of biological role, guanine nucleotide exchange factor (GEF) which may activate the small GTPases Rab. May promote the exchange of GDP to GTP, converting inactive GDP-bound Rab proteins into their active GTP-bound form. This is DENN domain-containing protein 5B (dennd5b) from Danio rerio (Zebrafish).